The sequence spans 182 residues: ATP synthase subunit b, chloroplastic (182 aa).

Residues 31-53 (IINISVVLGVLVYFGKGVLSNLL) form a helical membrane-spanning segment.

It belongs to the ATPase B chain family. As to quaternary structure, F-type ATPases have 2 components, F(1) - the catalytic core - and F(0) - the membrane proton channel. F(1) has five subunits: alpha(3), beta(3), gamma(1), delta(1), epsilon(1). F(0) has four main subunits: a(1), b(1), b'(1) and c(10-14). The alpha and beta chains form an alternating ring which encloses part of the gamma chain. F(1) is attached to F(0) by a central stalk formed by the gamma and epsilon chains, while a peripheral stalk is formed by the delta, b and b' chains.

Its subcellular location is the plastid. It is found in the chloroplast thylakoid membrane. In terms of biological role, f(1)F(0) ATP synthase produces ATP from ADP in the presence of a proton or sodium gradient. F-type ATPases consist of two structural domains, F(1) containing the extramembraneous catalytic core and F(0) containing the membrane proton channel, linked together by a central stalk and a peripheral stalk. During catalysis, ATP synthesis in the catalytic domain of F(1) is coupled via a rotary mechanism of the central stalk subunits to proton translocation. Its function is as follows. Component of the F(0) channel, it forms part of the peripheral stalk, linking F(1) to F(0). This is ATP synthase subunit b, chloroplastic from Welwitschia mirabilis (Tree tumbo).